The chain runs to 376 residues: Queuine tRNA-ribosyltransferase (376 aa).

Aspartate 90 (proton acceptor) is an active-site residue. Residues 90 to 94 (DSGGF), aspartate 144, glutamine 193, and glycine 220 contribute to the substrate site. The tract at residues 251–257 (GVGTPED) is RNA binding. The active-site Nucleophile is the aspartate 270. The segment at 275–279 (TRNAR) is RNA binding; important for wobble base 34 recognition. Residues cysteine 308, cysteine 310, cysteine 313, and histidine 339 each contribute to the Zn(2+) site.

This sequence belongs to the queuine tRNA-ribosyltransferase family. In terms of assembly, homodimer. Within each dimer, one monomer is responsible for RNA recognition and catalysis, while the other monomer binds to the replacement base PreQ1. Requires Zn(2+) as cofactor.

It catalyses the reaction 7-aminomethyl-7-carbaguanine + guanosine(34) in tRNA = 7-aminomethyl-7-carbaguanosine(34) in tRNA + guanine. It participates in tRNA modification; tRNA-queuosine biosynthesis. Functionally, catalyzes the base-exchange of a guanine (G) residue with the queuine precursor 7-aminomethyl-7-deazaguanine (PreQ1) at position 34 (anticodon wobble position) in tRNAs with GU(N) anticodons (tRNA-Asp, -Asn, -His and -Tyr). Catalysis occurs through a double-displacement mechanism. The nucleophile active site attacks the C1' of nucleotide 34 to detach the guanine base from the RNA, forming a covalent enzyme-RNA intermediate. The proton acceptor active site deprotonates the incoming PreQ1, allowing a nucleophilic attack on the C1' of the ribose to form the product. After dissociation, two additional enzymatic reactions on the tRNA convert PreQ1 to queuine (Q), resulting in the hypermodified nucleoside queuosine (7-(((4,5-cis-dihydroxy-2-cyclopenten-1-yl)amino)methyl)-7-deazaguanosine). This is Queuine tRNA-ribosyltransferase from Cupriavidus taiwanensis (strain DSM 17343 / BCRC 17206 / CCUG 44338 / CIP 107171 / LMG 19424 / R1) (Ralstonia taiwanensis (strain LMG 19424)).